Reading from the N-terminus, the 128-residue chain is Putative transmembrane protein 244 (128 aa).

The next 3 helical transmembrane spans lie at 17–37 (FLLC…MGCV), 65–85 (VLLV…VPVV), and 93–113 (AISV…EFPL).

It localises to the membrane. This chain is Putative transmembrane protein 244 (TMEM244), found in Homo sapiens (Human).